Consider the following 482-residue polypeptide: Abscisic acid 8'-hydroxylase 2 (482 aa).

A helical membrane pass occupies residues 20-40 (PALITLTIVVVVVVLLFKWWL). C431 is a binding site for heme.

It belongs to the cytochrome P450 family. It depends on heme as a cofactor. In terms of tissue distribution, mainly expressed in dry seeds. Lower expression in rosette leaves, flowers, siliques and stems. Not expressed in roots. Expressed in both endosperm and vascular tissues of embryo during the seed development and in cortex and endodermis in germinating embryo.

It localises to the membrane. The enzyme catalyses 2-cis-(+)-abscisate + reduced [NADPH--hemoprotein reductase] + O2 = (+)-8'-hydroxyabscisate + oxidized [NADPH--hemoprotein reductase] + H2O + H(+). Its pathway is plant hormone degradation; abscisic acid degradation. In terms of biological role, involved in the oxidative degradation of abscisic acid, but not in the isomerization of the produced 8'-hydroxyabscisic acid (8'-OH-ABA) to (-)-phaseic acid (PA). Involved in the control of seed dormancy and germination. This chain is Abscisic acid 8'-hydroxylase 2 (CYP707A2), found in Arabidopsis thaliana (Mouse-ear cress).